The sequence spans 225 residues: Myelin-associated neurite-outgrowth inhibitor (225 aa).

The Cytoplasmic portion of the chain corresponds to 1-58 (MNPVYSPGSSGVPYANAKGIGYPAGFPMGYAAAAPAYSPNMYAGPNPAFQQELEHPAH). A helical transmembrane segment spans residues 59–75 (VSSGVQMFMFGHAFSVA). Topologically, residues 76-173 (RNGAIPSGYT…PAPIQSPRGN (98 aa)) are extracellular. Residues 174-193 (GVAMGMVAGTTMAMSAGTLL) traverse the membrane as a helical segment. Topologically, residues 194–225 (TSHYPSPVAPQVTMPTYRPPGTPTYSYVPPQW) are cytoplasmic.

This sequence belongs to the FAM168 family.

Its subcellular location is the cytoplasm. It localises to the perinuclear region. The protein localises to the cell membrane. The protein resides in the cell projection. It is found in the axon. Functionally, inhibitor of neuronal axonal outgrowth. This is Myelin-associated neurite-outgrowth inhibitor (fam168b) from Xenopus laevis (African clawed frog).